The primary structure comprises 332 residues: tRNA N6-adenosine threonylcarbamoyltransferase (332 aa).

Fe cation contacts are provided by H108 and H112. Substrate is bound by residues 129–133, D161, E178, and S258; that span reads LISGG. D286 is a Fe cation binding site.

The protein belongs to the KAE1 / TsaD family. The cofactor is Fe(2+).

Its subcellular location is the cytoplasm. The catalysed reaction is L-threonylcarbamoyladenylate + adenosine(37) in tRNA = N(6)-L-threonylcarbamoyladenosine(37) in tRNA + AMP + H(+). Required for the formation of a threonylcarbamoyl group on adenosine at position 37 (t(6)A37) in tRNAs that read codons beginning with adenine. Is probably involved in the transfer of the threonylcarbamoyl moiety of threonylcarbamoyl-AMP (TC-AMP) to the N6 group of A37. This chain is tRNA N6-adenosine threonylcarbamoyltransferase, found in Pyrobaculum arsenaticum (strain DSM 13514 / JCM 11321 / PZ6).